A 199-amino-acid chain; its full sequence is Nucleoside triphosphate pyrophosphatase (199 aa).

Asp76 serves as the catalytic Proton acceptor.

It belongs to the Maf family. A divalent metal cation serves as cofactor.

It is found in the cytoplasm. The enzyme catalyses a ribonucleoside 5'-triphosphate + H2O = a ribonucleoside 5'-phosphate + diphosphate + H(+). It carries out the reaction a 2'-deoxyribonucleoside 5'-triphosphate + H2O = a 2'-deoxyribonucleoside 5'-phosphate + diphosphate + H(+). Nucleoside triphosphate pyrophosphatase. May have a dual role in cell division arrest and in preventing the incorporation of modified nucleotides into cellular nucleic acids. The chain is Nucleoside triphosphate pyrophosphatase from Ruegeria pomeroyi (strain ATCC 700808 / DSM 15171 / DSS-3) (Silicibacter pomeroyi).